Here is a 282-residue protein sequence, read N- to C-terminus: NADPH-dependent 7-cyano-7-deazaguanine reductase (282 aa).

88-90 serves as a coordination point for substrate; sequence IES. An NADPH-binding site is contributed by 90–91; it reads SK. The Thioimide intermediate role is filled by Cys-190. The Proton donor role is filled by Asp-197. 229–230 contributes to the substrate binding site; sequence HE. Residue 258–259 participates in NADPH binding; the sequence is RG.

Belongs to the GTP cyclohydrolase I family. QueF type 2 subfamily. As to quaternary structure, homodimer.

The protein resides in the cytoplasm. The enzyme catalyses 7-aminomethyl-7-carbaguanine + 2 NADP(+) = 7-cyano-7-deazaguanine + 2 NADPH + 3 H(+). Its pathway is tRNA modification; tRNA-queuosine biosynthesis. Its function is as follows. Catalyzes the NADPH-dependent reduction of 7-cyano-7-deazaguanine (preQ0) to 7-aminomethyl-7-deazaguanine (preQ1). The chain is NADPH-dependent 7-cyano-7-deazaguanine reductase from Shigella dysenteriae serotype 1 (strain Sd197).